A 201-amino-acid chain; its full sequence is Extracellular superoxide dismutase [Cu-Zn] (201 aa).

Positions 1–42 (MINSFIVIFLSFLIFINYANLVCVEATHVYGRRSHSNGMHGN) are cleaved as a signal peptide. 3 residues coordinate Cu cation: His-89, His-91, and His-106. Cys-100 and Cys-192 are joined by a disulfide. His-106, His-114, His-123, and Asp-126 together coordinate Zn(2+). Residue His-163 coordinates Cu cation.

Belongs to the Cu-Zn superoxide dismutase family. Homodimer. Cu cation is required as a cofactor. It depends on Zn(2+) as a cofactor.

The protein localises to the secreted. The protein resides in the extracellular space. It carries out the reaction 2 superoxide + 2 H(+) = H2O2 + O2. In terms of biological role, destroys radicals which are normally produced within the cells and which are toxic to biological systems. May act in the parasite defense against phagocyte-generated reactive oxygen species. This is Extracellular superoxide dismutase [Cu-Zn] (sod-4) from Onchocerca volvulus.